A 216-amino-acid polypeptide reads, in one-letter code: ATP phosphoribosyltransferase (216 aa).

This sequence belongs to the ATP phosphoribosyltransferase family. Short subfamily. As to quaternary structure, heteromultimer composed of HisG and HisZ subunits.

It localises to the cytoplasm. The enzyme catalyses 1-(5-phospho-beta-D-ribosyl)-ATP + diphosphate = 5-phospho-alpha-D-ribose 1-diphosphate + ATP. Its pathway is amino-acid biosynthesis; L-histidine biosynthesis; L-histidine from 5-phospho-alpha-D-ribose 1-diphosphate: step 1/9. Its function is as follows. Catalyzes the condensation of ATP and 5-phosphoribose 1-diphosphate to form N'-(5'-phosphoribosyl)-ATP (PR-ATP). Has a crucial role in the pathway because the rate of histidine biosynthesis seems to be controlled primarily by regulation of HisG enzymatic activity. In Nitrosomonas eutropha (strain DSM 101675 / C91 / Nm57), this protein is ATP phosphoribosyltransferase.